Here is a 276-residue protein sequence, read N- to C-terminus: WIMGHMVNAIYQIDEFVNLGANSIETDVSFDDSANPEYTYHGVPCDCRRWCKKWEYFNNFLKALRKATTPGDSKYHEKLVLVVFDLKTNSLYDHQAYDAGKKLAKNLLQHYWNNGNNGGRAYIVLSIPNLSHYKLITGFKETLKNEGHPELMEKVGFDFSGNDNIDQVAKAYKKAGVTGRVWQSDGITNCIASFIRGLDRAKEAVANRDSSNGFINKVYYWTVDKRATTREALDAEVDGIMTNDPDVIADVLNESAYKAKFRIATYDDNPWETFKK.

His5 is an active-site residue. Residues Glu25 and Asp27 each contribute to the Mg(2+) site. His41 acts as the Nucleophile in catalysis. 2 cysteine pairs are disulfide-bonded: Cys45/Cys51 and Cys47/Cys190. Residue Asp85 participates in Mg(2+) binding. Asn129 and Asn253 each carry an N-linked (GlcNAc...) asparagine glycan.

The protein belongs to the arthropod phospholipase D family. Class II subfamily. Mg(2+) is required as a cofactor. Expressed by the venom gland.

It is found in the secreted. The enzyme catalyses an N-(acyl)-sphingosylphosphocholine = an N-(acyl)-sphingosyl-1,3-cyclic phosphate + choline. The catalysed reaction is an N-(acyl)-sphingosylphosphoethanolamine = an N-(acyl)-sphingosyl-1,3-cyclic phosphate + ethanolamine. It catalyses the reaction a 1-acyl-sn-glycero-3-phosphocholine = a 1-acyl-sn-glycero-2,3-cyclic phosphate + choline. It carries out the reaction a 1-acyl-sn-glycero-3-phosphoethanolamine = a 1-acyl-sn-glycero-2,3-cyclic phosphate + ethanolamine. Functionally, dermonecrotic toxins cleave the phosphodiester linkage between the phosphate and headgroup of certain phospholipids (sphingolipid and lysolipid substrates), forming an alcohol (often choline) and a cyclic phosphate. This toxin acts on sphingomyelin (SM). It may also act on ceramide phosphoethanolamine (CPE), lysophosphatidylcholine (LPC) and lysophosphatidylethanolamine (LPE), but not on lysophosphatidylserine (LPS), and lysophosphatidylglycerol (LPG). It acts by transphosphatidylation, releasing exclusively cyclic phosphate products as second products. Induces dermonecrosis, hemolysis, increased vascular permeability, edema, inflammatory response, and platelet aggregation. This chain is Dermonecrotic toxin LsaSicTox-alphaIB2iii, found in Loxosceles sabina (Tucson recluse spider).